The following is a 422-amino-acid chain: Histidine--tRNA ligase (422 aa).

Belongs to the class-II aminoacyl-tRNA synthetase family. As to quaternary structure, homodimer.

It localises to the cytoplasm. It carries out the reaction tRNA(His) + L-histidine + ATP = L-histidyl-tRNA(His) + AMP + diphosphate + H(+). The chain is Histidine--tRNA ligase from Onion yellows phytoplasma (strain OY-M).